Reading from the N-terminus, the 1057-residue chain is Nuclear RNAi defective-3 protein (1057 aa).

Disordered stretches follow at residues 1 to 89 and 344 to 388; these read MDLL…GLSV and LTNS…ERTV. The segment covering 17 to 30 has biased composition (low complexity); the sequence is STAKKPATSASSTP. Basic and acidic residues-rich tracts occupy residues 67-81 and 356-388; these read PKRE…DPKR and GGRE…ERTV. One can recognise a PAZ domain in the interval 387–500; sequence TVSHYQRQFQ…YPMELMSILP (114 aa). One can recognise a Piwi domain in the interval 677–1001; that stretch reads GIIAEKRPDM…LAKRGHNNYK (325 aa).

Its subcellular location is the cytoplasm. It localises to the nucleus. Functionally, transports small interfering RNAs (siRNAs) from the cytoplasm to the nucleus. Required for RNA interference (RNAi) in nuclei. Required for exogenous RNAi-induced H3K27 methylation. In Caenorhabditis elegans, this protein is Nuclear RNAi defective-3 protein (nrde-3).